The following is a 1620-amino-acid chain: ABC-type organic anion transporter ABCA8A (1620 aa).

Transmembrane regions (helical) follow at residues 30–50 (TFLE…FLQL), 224–244 (CFLF…SAGV), 263–283 (SAFW…VTLL), 294–314 (VFLT…LSLI), 328–348 (FLTD…GFTA), 357–377 (LEWL…VQLL), and 397–417 (IGTI…TFYF). Residues N454 and N482 are each glycosylated (N-linked (GlcNAc...) asparagine). An ABC transporter 1 domain is found at 478–713 (IRIRNLTKDY…WGIGYHLSLQ (236 aa)). Residue 514-521 (GHSGAGKS) coordinates ATP. The helical transmembrane segment at 861-881 (IVILILVLGIGLLHILSANIY) threads the bilayer. N-linked (GlcNAc...) asparagine glycosylation occurs at N967. 7 consecutive transmembrane segments (helical) span residues 979–999 (CFPV…APSA), 1019–1039 (YLAY…YISM), 1068–1088 (ALFE…AFYA), 1105–1125 (ILYV…ISFI), 1133–1153 (SGLW…FMLI), 1159–1179 (ISLF…CTLL), and 1196–1216 (EYSY…VVIL). The ABC transporter 2 domain occupies 1284-1517 (LRKEYKGKKK…FGKEYLLEMK (234 aa)). Residue 1322-1329 (GHNGAGKS) coordinates ATP.

This sequence belongs to the ABC transporter superfamily. ABCA family. In terms of tissue distribution, expressed in lung, heart, liver, skeletal muscle and testis. Highly expressed in the liver, and is also abundant in heart and skeletal muscle. Highly expressed in heart.

It is found in the cell membrane. The protein localises to the basolateral cell membrane. The enzyme catalyses taurocholate(in) + ATP + H2O = taurocholate(out) + ADP + phosphate + H(+). It catalyses the reaction cholesterol(in) + ATP + H2O = cholesterol(out) + ADP + phosphate + H(+). Cholesterol efflux is increased by extracellularly applied taurocholate. Functionally, mediates cholesterol and taurocholate efflux. Through the interaction with ABCA1 potentiates the cholesterol efflux to lipid-free APOA1, in turn regulates high-density lipoprotein cholesterol levels. This Mus musculus (Mouse) protein is ABC-type organic anion transporter ABCA8A.